The following is a 706-amino-acid chain: Protein kinase C theta type (706 aa).

The C2 domain maps to 1 to 107 (MSPFLRIGLS…KNNGKTEIWL (107 aa)). Tyrosine 90 carries the phosphotyrosine; by LCK modification. A Phorbol-ester/DAG-type 1 zinc finger spans residues 159-209 (CHEFTATFFPQPTFCSVCHEFVWGLNKQGYQCRQCNAAIHKKCIDKVIAKC). At threonine 219 the chain carries Phosphothreonine; by autocatalysis. The segment at 231–281 (PHRFKVYNYKSPTFCEHCGTLLWGLARQGLKCDACGMNVHHRCQTKVANLC) adopts a Phorbol-ester/DAG-type 2 zinc-finger fold. A Phosphoserine modification is found at serine 348. Residues 380–634 (FILHKMLGKG…RGDIRQHPLF (255 aa)) enclose the Protein kinase domain. ATP is bound by residues 386-394 (LGKGSFGKV) and lysine 409. Aspartate 504 serves as the catalytic Proton acceptor. Residue threonine 538 is modified to Phosphothreonine; by PDPK1. The AGC-kinase C-terminal domain occupies 635 to 706 (REINWEELER…MNPGMERLIS (72 aa)). Residues serine 676, serine 685, and serine 695 each carry the phosphoserine modification.

This sequence belongs to the protein kinase superfamily. AGC Ser/Thr protein kinase family. PKC subfamily. As to quaternary structure, part of a lipid raft complex composed at least of BCL10, CARD11, MALT1 and IKBKB. Interacts with GLRX3 (via N-terminus). Interacts with ECT2. Interacts with CCDC88A/GIV; the interaction leads to phosphorylation of CCDC88A and inhibition of its guanine nucleotide exchange factor activity. Interacts with PRKCH upstream open reading frame 2; the interaction leads to inhibition of kinase activity. Interacts with CD28. The cofactor is Mg(2+). Post-translationally, autophosphorylation at Thr-219 is required for targeting to the TCR and cellular function of PRKCQ upon antigen receptor ligation. Following TCR stimulation, phosphorylated at Tyr-90 and Ser-685. In terms of tissue distribution, expressed in skeletal muscle, T-cells, megakaryoblastic cells and platelets.

It localises to the cytoplasm. It is found in the cell membrane. It carries out the reaction L-seryl-[protein] + ATP = O-phospho-L-seryl-[protein] + ADP + H(+). The catalysed reaction is L-threonyl-[protein] + ATP = O-phospho-L-threonyl-[protein] + ADP + H(+). Novel PKCs (PRKCD, PRKCE, PRKCH and PRKCQ) are calcium-insensitive, but activated by diacylglycerol (DAG) and phosphatidylserine. Three specific sites; Thr-538 (activation loop of the kinase domain), Ser-676 (turn motif) and Ser-695 (hydrophobic region), need to be phosphorylated for its full activation. Inhibited by PRKCH upstream open reading frame 2. In terms of biological role, calcium-independent, phospholipid- and diacylglycerol (DAG)-dependent serine/threonine-protein kinase that mediates non-redundant functions in T-cell receptor (TCR) signaling, including T-cells activation, proliferation, differentiation and survival, by mediating activation of multiple transcription factors such as NF-kappa-B, JUN, NFATC1 and NFATC2. In TCR-CD3/CD28-co-stimulated T-cells, is required for the activation of NF-kappa-B and JUN, which in turn are essential for IL2 production, and participates in the calcium-dependent NFATC1 and NFATC2 transactivation. Mediates the activation of the canonical NF-kappa-B pathway (NFKB1) by direct phosphorylation of CARD11 on several serine residues, inducing CARD11 association with lipid rafts and recruitment of the BCL10-MALT1 complex, which then activates IKK complex, resulting in nuclear translocation and activation of NFKB1. May also play an indirect role in activation of the non-canonical NF-kappa-B (NFKB2) pathway. In the signaling pathway leading to JUN activation, acts by phosphorylating the mediator STK39/SPAK and may not act through MAP kinases signaling. Plays a critical role in TCR/CD28-induced NFATC1 and NFATC2 transactivation by participating in the regulation of reduced inositol 1,4,5-trisphosphate generation and intracellular calcium mobilization. After costimulation of T-cells through CD28 can phosphorylate CBLB and is required for the ubiquitination and subsequent degradation of CBLB, which is a prerequisite for the activation of TCR. During T-cells differentiation, plays an important role in the development of T-helper 2 (Th2) cells following immune and inflammatory responses, and, in the development of inflammatory autoimmune diseases, is necessary for the activation of IL17-producing Th17 cells. May play a minor role in Th1 response. Upon TCR stimulation, mediates T-cell protective survival signal by phosphorylating BAD, thus protecting T-cells from BAD-induced apoptosis, and by up-regulating BCL-X(L)/BCL2L1 levels through NF-kappa-B and JUN pathways. In platelets, regulates signal transduction downstream of the ITGA2B, CD36/GP4, F2R/PAR1 and F2RL3/PAR4 receptors, playing a positive role in 'outside-in' signaling and granule secretion signal transduction. May relay signals from the activated ITGA2B receptor by regulating the uncoupling of WASP and WIPF1, thereby permitting the regulation of actin filament nucleation and branching activity of the Arp2/3 complex. May mediate inhibitory effects of free fatty acids on insulin signaling by phosphorylating IRS1, which in turn blocks IRS1 tyrosine phosphorylation and downstream activation of the PI3K/AKT pathway. Phosphorylates MSN (moesin) in the presence of phosphatidylglycerol or phosphatidylinositol. Phosphorylates PDPK1 at 'Ser-504' and 'Ser-532' and negatively regulates its ability to phosphorylate PKB/AKT1. Phosphorylates CCDC88A/GIV and inhibits its guanine nucleotide exchange factor activity. Phosphorylates and activates LRRK1, which phosphorylates RAB proteins involved in intracellular trafficking. The protein is Protein kinase C theta type (PRKCQ) of Homo sapiens (Human).